Consider the following 164-residue polypeptide: Transcription antitermination protein NusB (164 aa).

The protein belongs to the NusB family.

In terms of biological role, involved in transcription antitermination. Required for transcription of ribosomal RNA (rRNA) genes. Binds specifically to the boxA antiterminator sequence of the ribosomal RNA (rrn) operons. This chain is Transcription antitermination protein NusB, found in Chlorobaculum parvum (strain DSM 263 / NCIMB 8327) (Chlorobium vibrioforme subsp. thiosulfatophilum).